A 443-amino-acid chain; its full sequence is UDP-N-acetylmuramate--L-alanine ligase (443 aa).

Residue 110 to 116 (GAHGKTS) coordinates ATP.

The protein belongs to the MurCDEF family.

It is found in the cytoplasm. The catalysed reaction is UDP-N-acetyl-alpha-D-muramate + L-alanine + ATP = UDP-N-acetyl-alpha-D-muramoyl-L-alanine + ADP + phosphate + H(+). It participates in cell wall biogenesis; peptidoglycan biosynthesis. Cell wall formation. The chain is UDP-N-acetylmuramate--L-alanine ligase from Streptococcus agalactiae serotype V (strain ATCC BAA-611 / 2603 V/R).